The chain runs to 437 residues: MTNWLLLIVCLSIACQDVTSAIHQRKSSKNLEHSMNVIHEWKYIDYDFGSDEKRQAAIQSGEYDYTKNYPFDVDQWHNKTFLAVIRYDGVPSSLNVISEKIGNGGCLLQPYPDWSWANYKDCSGIVSAYKIAIDKFDRLWVLDSGLINNIQLMCSPKLLAFDLNTSKLLKQIEIPHNIAVNASTGMGGPVSLVVQAMDPMNTTVYIADDRGDALIIYQNSDDSFHRLTSKTFDNDLRYSELAVAGESFTVHDGIFGMALSPVTNNLYYSPLTSHSLYYVNMEPFMKSQYEENNIEYEGIQDIFNTQSSAKVMSKNGVLFFGLVNNSAIGCWNEHQPLQRQNMDMVAQNEKTLQMIISVKIIQNLAYSGRMNRIHKNEYMLALSNRMQKIVNNDFNFDEVNFRILGANVNNLIKNTRCAKSNNQNNNQNKYKNQAHLD.

The signal sequence occupies residues 1 to 20; that stretch reads MTNWLLLIVCLSIACQDVTS. Residues asparagine 78, asparagine 164, asparagine 181, asparagine 201, and asparagine 324 are each glycosylated (N-linked (GlcNAc...) asparagine).

Belongs to the major royal jelly protein family. As to expression, found in and secreted from the hypopharyngeal glands of the worker honey bee (at protein level); expression peaks at 20 days post eclosion. Expressed in the spermatheca of adult queen bees (at protein level); Expression levels are higher in mated queens than in virgin queens. Expressed at low level in the brains of adult worker bees. Protein abundance does not seem to correlate with transcript abundance.

The protein resides in the secreted. In terms of biological role, component of royal jelly, a substance produced in the hypopharyngeal gland containing proteins, free amino acids, fatty acids, sugars and other nutrients, which is fed to developing larvae by worker nurse bees. All larvae are fed some royal jelly (also known as worker jelly) early in their development but it forms the principal source of nutrition for larvae destined to become queen bees. Produced in the spermatheca of adult queen bees, along with other major royal jelly proteins, where it may act as a nutrient supply for sperm stored by mated queens, or be involved in energy metabolism. The sequence is that of Major royal jelly protein 6 from Apis mellifera (Honeybee).